The sequence spans 183 residues: Large ribosomal subunit protein uL22 (183 aa).

The tract at residues 163–183 (KTAAKKQSAKKLKKQKMMYRE) is disordered. The span at 165 to 183 (AAKKQSAKKLKKQKMMYRE) shows a compositional bias: basic residues.

Belongs to the universal ribosomal protein uL22 family.

The protein is Large ribosomal subunit protein uL22 (rpl-17) of Pectinaria gouldii (Trumpet worm).